The chain runs to 565 residues: Periplasmic trehalase (565 aa).

Positions 1–30 are cleaved as a signal peptide; it reads MKSPAPSRPQKMALIPACIFLCFAALSVQA. Substrate is bound by residues Arg152, 159 to 160, Asn196, 205 to 207, 277 to 279, and Gly310; these read WD, RSQ, and RPE. Residues Asp312 and Glu496 each act as proton donor/acceptor in the active site. Glu511 serves as a coordination point for substrate. Residues 538–565 are disordered; the sequence is PCDNVPATRPTVKSATTQPSTKEAQPTP. Residues 548–565 show a composition bias toward polar residues; it reads TVKSATTQPSTKEAQPTP.

This sequence belongs to the glycosyl hydrolase 37 family. Monomer.

It is found in the periplasm. The catalysed reaction is alpha,alpha-trehalose + H2O = alpha-D-glucose + beta-D-glucose. Functionally, provides the cells with the ability to utilize trehalose at high osmolarity by splitting it into glucose molecules that can subsequently be taken up by the phosphotransferase-mediated uptake system. The polypeptide is Periplasmic trehalase (Escherichia coli (strain 55989 / EAEC)).